A 390-amino-acid chain; its full sequence is GTPase Obg/CgtA (390 aa).

An Obg domain is found at 1–159; it reads MKFVDEAVIK…RDIRLELLLL (159 aa). The 174-residue stretch at 160–333 folds into the OBG-type G domain; it reads ADVGMLGMPN…LCMKLAEFMD (174 aa). GTP contacts are provided by residues 166-173, 191-195, 213-216, 283-286, and 314-316; these read GMPNAGKS, FTTLV, DIPG, NKVD, and SAA. Residues S173 and T193 each contribute to the Mg(2+) site.

This sequence belongs to the TRAFAC class OBG-HflX-like GTPase superfamily. OBG GTPase family. In terms of assembly, monomer. Interacts with SpoT (AC Q9KNM2) in a yeast 2-hybrid assay. The cofactor is Mg(2+).

Its subcellular location is the cytoplasm. Functionally, depletion experiments lead to gene down regulation and a dramatic increase in ppGpp levels, like those seen in the stringent response. There is no change in cell morphology in depletion experiments, but cells are very sensitive to the DNA-damaging agent hydroxyurea and are very elongated. Overexpression reduces growth and leads to elongated cells. Overexpression of proteins with C-terminal deletions of 29 or 62 amino acids showed fewer elongated cells. In terms of biological role, an essential GTPase which binds GTP, GDP and possibly (p)ppGpp with moderate affinity, with high nucleotide exchange rates and a fairly low GTP hydrolysis rate. It may play a role in control of the cell cycle, stress response, ribosome biogenesis and in those bacteria that undergo differentiation, in morphogenesis control. GTPase activity is stimulated by 50S ribosomal subunits. The sequence is that of GTPase Obg/CgtA from Vibrio cholerae serotype O1 (strain ATCC 39315 / El Tor Inaba N16961).